A 500-amino-acid chain; its full sequence is Na(+)/H(+) antiporter NhaB (500 aa).

A run of 12 helical transmembrane segments spans residues 28–50 (FLLL…VLVG), 68–88 (GGLL…ALYA), 98–118 (LLLM…LLLF), 121–141 (LLLG…LAAL), 145–165 (FLDA…FFAV), 205–225 (LLMH…VGEP), 244–264 (QVAP…VLLE), 311–331 (VLIV…LLVI), 350–370 (FQEA…VAVI), 394–414 (MLFI…VATI), 449–469 (VATP…IAPL), and 477–497 (MVWM…WAVS).

Belongs to the NhaB Na(+)/H(+) (TC 2.A.34) antiporter family.

The protein localises to the cell inner membrane. The catalysed reaction is 2 Na(+)(in) + 3 H(+)(out) = 2 Na(+)(out) + 3 H(+)(in). In terms of biological role, na(+)/H(+) antiporter that extrudes sodium in exchange for external protons. The polypeptide is Na(+)/H(+) antiporter NhaB (Pseudomonas aeruginosa (strain LESB58)).